The primary structure comprises 1580 residues: Dynamin-binding protein (1580 aa).

M1 carries the post-translational modification N-acetylmethionine. SH3 domains are found at residues 2 to 61 (EPGS…IVTI), 66 to 127 (EGER…ELCL), and 146 to 205 (YSLG…LLGP). Disordered stretches follow at residues 211–245 (ESVNSRSGDDSAVNGEVDVPPEEAESGGDEDDQQS), 304–446 (NRTE…LVPL), 500–546 (YAQK…DSLD), and 589–688 (RGSS…AQTF). The segment covering 229–243 (VPPEEAESGGDEDDQ) has biased composition (acidic residues). One can recognise an SH3 4 domain in the interval 244–303 (QSGTYGIALYRFQALETNELDFEVGDRIQILGTLEDGWLEGCLKGKTGVFPHRFVKLCPS). Composition is skewed to polar residues over residues 422–439 (QKSQHYLTAGGSHQTSDP) and 502–513 (QKHQTSTENTAS). Over residues 516 to 527 (DPPERPERRPGL) the composition is skewed to basic and acidic residues. A compositionally biased stretch (pro residues) spans 608–617 (RPPPPRPRTP). The segment covering 671 to 682 (APEKEDSEHMEK) has biased composition (basic and acidic residues). S683 carries the phosphoserine modification. Residues 694 to 755 (LARIRDVEQD…LELQQLRDMT (62 aa)) adopt a coiled-coil conformation. Positions 783–970 (KRAKVVAELL…KEINVNINEY (188 aa)) constitute a DH domain. In terms of domain architecture, BAR spans 1011 to 1220 (LKHLTGFAPQ…LKATDREGNL (210 aa)). The SH3 5 domain occupies 1288–1351 (PPEKLFHVQR…YSSFLKPYNP (64 aa)). Residues 1356-1365 (SDASVASHSS) are compositionally biased toward low complexity. Disordered stretches follow at residues 1356-1384 (SDASVASHSSTESEHSGSSPGCHRQNSHS) and 1426-1514 (TGHP…GSSE). The span at 1426-1440 (TGHPETGPSTCSSDP) shows a compositional bias: polar residues. In terms of domain architecture, SH3 6 spans 1516–1579 (EGNQVYFAIY…PSNYIRKTEY (64 aa)).

In terms of assembly, binds DNM1 via its N-terminal SH3 domains. The C-terminal SH3 domain binds a complex containing actin, tubulin, Hsp70 and actin-regulatory proteins, such as ENAH, EVL, WIRE, CR16, WAVE1 and NAP1L1. Interacts with FASLG. Interacts (via SH3 domain 6) with WASL. Interacts (via SH3 domain 6) interacts with ENAH. Interacts (via C-terminal domain) with TJP1; required for the apical cell-cell junction localization of DNMBP.

The protein resides in the cytoplasm. It localises to the golgi apparatus. The protein localises to the golgi stack. It is found in the cytoskeleton. Its subcellular location is the synapse. The protein resides in the cell junction. Its function is as follows. Plays a critical role as a guanine nucleotide exchange factor (GEF) for CDC42 in several intracellular processes associated with the actin and microtubule cytoskeleton. Regulates the structure of apical junctions in epithelial cells. Participates in the normal lumenogenesis of epithelial cell cysts by regulating spindle orientation. Plays a role in ciliogenesis. May play a role in membrane trafficking between the cell surface and the Golgi. This is Dynamin-binding protein from Mus musculus (Mouse).